A 185-amino-acid chain; its full sequence is GTP cyclohydrolase 1 (185 aa).

3 residues coordinate Zn(2+): Cys75, His78, and Cys146.

It belongs to the GTP cyclohydrolase I family. Toroid-shaped homodecamer, composed of two pentamers of five dimers.

The catalysed reaction is GTP + H2O = 7,8-dihydroneopterin 3'-triphosphate + formate + H(+). It participates in cofactor biosynthesis; 7,8-dihydroneopterin triphosphate biosynthesis; 7,8-dihydroneopterin triphosphate from GTP: step 1/1. The protein is GTP cyclohydrolase 1 of Methylococcus capsulatus (strain ATCC 33009 / NCIMB 11132 / Bath).